The following is a 361-amino-acid chain: Mannose-1-phosphate guanyltransferase (361 aa).

Thr-153 is modified (phosphothreonine). A Glycyl lysine isopeptide (Lys-Gly) (interchain with G-Cter in ubiquitin) cross-link involves residue Lys-244.

This sequence belongs to the transferase hexapeptide repeat family.

Its subcellular location is the cytoplasm. The catalysed reaction is alpha-D-mannose 1-phosphate + GTP + H(+) = GDP-alpha-D-mannose + diphosphate. The protein operates within nucleotide-sugar biosynthesis; GDP-alpha-D-mannose biosynthesis; GDP-alpha-D-mannose from alpha-D-mannose 1-phosphate (GTP route): step 1/1. Functionally, involved in cell wall synthesis where it is required for glycosylation. Involved in cell cycle progression through cell-size checkpoint. This Saccharomyces cerevisiae (strain ATCC 204508 / S288c) (Baker's yeast) protein is Mannose-1-phosphate guanyltransferase (PSA1).